The primary structure comprises 204 residues: Nucleoside triphosphate pyrophosphatase (204 aa).

Residue Asp79 is the Proton acceptor of the active site.

This sequence belongs to the Maf family. It depends on a divalent metal cation as a cofactor.

Its subcellular location is the cytoplasm. It carries out the reaction a ribonucleoside 5'-triphosphate + H2O = a ribonucleoside 5'-phosphate + diphosphate + H(+). The catalysed reaction is a 2'-deoxyribonucleoside 5'-triphosphate + H2O = a 2'-deoxyribonucleoside 5'-phosphate + diphosphate + H(+). In terms of biological role, nucleoside triphosphate pyrophosphatase. May have a dual role in cell division arrest and in preventing the incorporation of modified nucleotides into cellular nucleic acids. This Trichodesmium erythraeum (strain IMS101) protein is Nucleoside triphosphate pyrophosphatase.